A 290-amino-acid polypeptide reads, in one-letter code: Fructose-1,6-bisphosphatase class 1 (290 aa).

Residues Glu78, Asp96, Leu98, and Asp99 each contribute to the Mg(2+) site. Residues 99-102 (DGSS), Tyr201, and Lys226 each bind substrate. Position 232 (Glu232) interacts with Mg(2+).

Belongs to the FBPase class 1 family. In terms of assembly, homotetramer. It depends on Mg(2+) as a cofactor.

It localises to the cytoplasm. It carries out the reaction beta-D-fructose 1,6-bisphosphate + H2O = beta-D-fructose 6-phosphate + phosphate. Its pathway is carbohydrate biosynthesis; gluconeogenesis. The chain is Fructose-1,6-bisphosphatase class 1 from Helicobacter pylori (strain G27).